Consider the following 77-residue polypeptide: DNA-directed RNA polymerase subunit epsilon (77 aa).

The protein belongs to the RNA polymerase subunit epsilon family. RNAP is composed of a core of 2 alpha, a beta and a beta' subunit. The core is associated with a delta subunit, and at least one of epsilon or omega. When a sigma factor is associated with the core the holoenzyme is formed, which can initiate transcription.

The catalysed reaction is RNA(n) + a ribonucleoside 5'-triphosphate = RNA(n+1) + diphosphate. Its function is as follows. A non-essential component of RNA polymerase (RNAP). In Streptococcus pneumoniae serotype 2 (strain D39 / NCTC 7466), this protein is DNA-directed RNA polymerase subunit epsilon.